Consider the following 332-residue polypeptide: Ketol-acid reductoisomerase (NADP(+)) (332 aa).

The KARI N-terminal Rossmann domain maps to 2–182 (AKVYIDKDAS…GATRAGVIET (181 aa)). NADP(+) is bound by residues 25–28 (YGSQ), S53, and 83–86 (DMVQ). Residue H108 is part of the active site. G134 contacts NADP(+). Residues 183-328 (TFKEETETDL…RQIREISLRG (146 aa)) enclose the KARI C-terminal knotted domain. Residues D191, E195, E227, and E231 each coordinate Mg(2+). A substrate-binding site is contributed by S252.

Belongs to the ketol-acid reductoisomerase family. It depends on Mg(2+) as a cofactor.

It catalyses the reaction (2R)-2,3-dihydroxy-3-methylbutanoate + NADP(+) = (2S)-2-acetolactate + NADPH + H(+). The enzyme catalyses (2R,3R)-2,3-dihydroxy-3-methylpentanoate + NADP(+) = (S)-2-ethyl-2-hydroxy-3-oxobutanoate + NADPH + H(+). It functions in the pathway amino-acid biosynthesis; L-isoleucine biosynthesis; L-isoleucine from 2-oxobutanoate: step 2/4. The protein operates within amino-acid biosynthesis; L-valine biosynthesis; L-valine from pyruvate: step 2/4. Involved in the biosynthesis of branched-chain amino acids (BCAA). Catalyzes an alkyl-migration followed by a ketol-acid reduction of (S)-2-acetolactate (S2AL) to yield (R)-2,3-dihydroxy-isovalerate. In the isomerase reaction, S2AL is rearranged via a Mg-dependent methyl migration to produce 3-hydroxy-3-methyl-2-ketobutyrate (HMKB). In the reductase reaction, this 2-ketoacid undergoes a metal-dependent reduction by NADPH to yield (R)-2,3-dihydroxy-isovalerate. This Sulfurisphaera tokodaii (strain DSM 16993 / JCM 10545 / NBRC 100140 / 7) (Sulfolobus tokodaii) protein is Ketol-acid reductoisomerase (NADP(+)).